Here is a 149-residue protein sequence, read N- to C-terminus: Flagellar basal-body protein FlbY (149 aa).

In terms of assembly, the basal body constitutes a major portion of the flagellar organelle and consists of five rings (E,L,P,S, and M) mounted on a central rod.

It is found in the bacterial flagellum basal body. This is Flagellar basal-body protein FlbY (flbY) from Caulobacter vibrioides (strain ATCC 19089 / CIP 103742 / CB 15) (Caulobacter crescentus).